Reading from the N-terminus, the 1032-residue chain is Probable LRR receptor-like serine/threonine-protein kinase At1g56130 (1032 aa).

The first 29 residues, 1 to 29, serve as a signal peptide directing secretion; sequence MTRIRRSPCLLLLIIWFMCIAGSVQVVQS. Over 30–636 the chain is Extracellular; that stretch reads QNQTGATTHP…PPSKGKNRTG (607 aa). N-linked (GlcNAc...) asparagine glycosylation is found at asparagine 31, asparagine 61, and asparagine 95. 10 LRR repeats span residues 101-122, 123-146, 148-170, 171-194, 196-217, 242-265, 290-314, 315-338, 340-360, and 361-385; these read ITNI…LWTL, TYLT…IGNL, RMQW…IGLL, TDLR…IGRC, KLQQ…SFAN, WTKL…SFSN, MKSL…IGEH, SSLR…LFNL, QLTH…TQKT, and QSLR…SLPS. Residue asparagine 145 is glycosylated (N-linked (GlcNAc...) asparagine). N-linked (GlcNAc...) asparagine glycosylation is present at asparagine 182. Asparagine 265, asparagine 302, asparagine 337, asparagine 348, and asparagine 352 each carry an N-linked (GlcNAc...) asparagine glycan. N-linked (GlcNAc...) asparagine glycosylation is found at asparagine 394, asparagine 580, and asparagine 633. A helical transmembrane segment spans residues 637–657; the sequence is TIVGVIVGVGLLSILAGVVMF. The Cytoplasmic portion of the chain corresponds to 658–1032; it reads TIRKRRKRYT…MLGSKINEGR (375 aa). Threonine 683 carries the phosphothreonine modification. The Protein kinase domain occupies 694-968; that stretch reads FDPSNKLGEG…VAMLSGDVEI (275 aa). ATP is bound by residues 700–708 and lysine 722; that span reads LGEGGFGPV. Tyrosine 767 carries the post-translational modification Phosphotyrosine. The active-site Proton acceptor is the aspartate 818. A phosphoserine mark is found at serine 822 and serine 851. Threonine 852 and threonine 857 each carry phosphothreonine. Position 865 is a phosphotyrosine (tyrosine 865). The segment at 1008–1032 is disordered; sequence APGSEISPRDSDFKPMLGSKINEGR.

The protein belongs to the protein kinase superfamily. Ser/Thr protein kinase family.

Its subcellular location is the cell membrane. It carries out the reaction L-seryl-[protein] + ATP = O-phospho-L-seryl-[protein] + ADP + H(+). It catalyses the reaction L-threonyl-[protein] + ATP = O-phospho-L-threonyl-[protein] + ADP + H(+). This Arabidopsis thaliana (Mouse-ear cress) protein is Probable LRR receptor-like serine/threonine-protein kinase At1g56130.